A 142-amino-acid chain; its full sequence is Large ribosomal subunit protein uL13 (142 aa).

The protein belongs to the universal ribosomal protein uL13 family. As to quaternary structure, part of the 50S ribosomal subunit.

In terms of biological role, this protein is one of the early assembly proteins of the 50S ribosomal subunit, although it is not seen to bind rRNA by itself. It is important during the early stages of 50S assembly. The sequence is that of Large ribosomal subunit protein uL13 from Thioalkalivibrio sulfidiphilus (strain HL-EbGR7).